The following is a 76-amino-acid chain: MKTYSFFVLFIVFIFFISSSKSHSKKHVRFLCATKAVKHIRKVCPDMCLTGEEVEVNEFCKMGYSDSQIKYICCPE.

Positions 1–24 are cleaved as a signal peptide; sequence MKTYSFFVLFIVFIFFISSSKSHS. 3 disulfides stabilise this stretch: Cys-32–Cys-60, Cys-44–Cys-73, and Cys-48–Cys-74.

It belongs to the insulin family.

The protein resides in the secreted. This is Probable insulin-like peptide alpha-type 1 (ins-21) from Caenorhabditis elegans.